We begin with the raw amino-acid sequence, 63 residues long: Kurtoxin-like II (63 aa).

Residues 2 to 62 (IDGYPVDYWN…ARIKRSGRCR (61 aa)) enclose the LCN-type CS-alpha/beta domain. 4 cysteine pairs are disulfide-bonded: Cys-12/Cys-61, Cys-16/Cys-37, Cys-23/Cys-44, and Cys-27/Cys-46.

It belongs to the long (4 C-C) scorpion toxin superfamily. Sodium channel inhibitor family. Alpha subfamily. As to expression, expressed by the venom gland.

The protein localises to the secreted. Its function is as follows. This neurotoxin acts on sodium and calcium channels. Potently inhibits native voltage-gated T-type calcium channel activity in mouse male germ cells. Also binds Cav3.1/CACNA1G, Cav3.2/CACNA1H, and Cav3.3/CACNA1I T-type calcium channels and inhibits the channels by modifying voltage-dependent gating. In addition, binds and significantly inhibits the inactivation of activated sodium channels (Nav1.2/SCN2A and Nav1.5/SCN5A). The chain is Kurtoxin-like II from Parabuthus granulatus (Granulated thick-tailed scorpion).